Consider the following 598-residue polypeptide: DNA ligase (598 aa).

Aspartate 258 provides a ligand contact to ATP. Catalysis depends on lysine 260, which acts as the N6-AMP-lysine intermediate. The ATP site is built by arginine 265, arginine 280, glutamate 310, phenylalanine 350, arginine 427, and lysine 433.

It belongs to the ATP-dependent DNA ligase family. Mg(2+) is required as a cofactor.

It carries out the reaction ATP + (deoxyribonucleotide)n-3'-hydroxyl + 5'-phospho-(deoxyribonucleotide)m = (deoxyribonucleotide)n+m + AMP + diphosphate.. Functionally, DNA ligase that seals nicks in double-stranded DNA during DNA replication, DNA recombination and DNA repair. The chain is DNA ligase from Sulfolobus acidocaldarius (strain ATCC 33909 / DSM 639 / JCM 8929 / NBRC 15157 / NCIMB 11770).